Here is a 658-residue protein sequence, read N- to C-terminus: DNA ligase (658 aa).

Residues 32–36 (DAVYD) and 81–82 (SL) contribute to the NAD(+) site. The active-site N6-AMP-lysine intermediate is lysine 112. Residues arginine 133, glutamate 167, and lysine 306 each coordinate NAD(+). Zn(2+) is bound by residues cysteine 400, cysteine 403, cysteine 416, and cysteine 421. The region spanning 577 to 658 (ESSSVFNNKT…LKRLKKLDQN (82 aa)) is the BRCT domain.

It belongs to the NAD-dependent DNA ligase family. LigA subfamily. The cofactor is Mg(2+). Requires Mn(2+) as cofactor.

The enzyme catalyses NAD(+) + (deoxyribonucleotide)n-3'-hydroxyl + 5'-phospho-(deoxyribonucleotide)m = (deoxyribonucleotide)n+m + AMP + beta-nicotinamide D-nucleotide.. In terms of biological role, DNA ligase that catalyzes the formation of phosphodiester linkages between 5'-phosphoryl and 3'-hydroxyl groups in double-stranded DNA using NAD as a coenzyme and as the energy source for the reaction. It is essential for DNA replication and repair of damaged DNA. The sequence is that of DNA ligase from Helicobacter pylori (strain G27).